The primary structure comprises 139 residues: Low molecular weight protein-tyrosine-phosphatase PtpB (139 aa).

C7 serves as the catalytic Nucleophile. Residue R13 is part of the active site. D111 (proton donor) is an active-site residue.

The protein belongs to the low molecular weight phosphotyrosine protein phosphatase family.

It catalyses the reaction O-phospho-L-tyrosyl-[protein] + H2O = L-tyrosyl-[protein] + phosphate. Dephosphorylates the phosphotyrosine-containing proteins. This Staphylococcus epidermidis (strain ATCC 35984 / DSM 28319 / BCRC 17069 / CCUG 31568 / BM 3577 / RP62A) protein is Low molecular weight protein-tyrosine-phosphatase PtpB (ptpB).